The primary structure comprises 961 residues: Phosphofurin acidic cluster sorting protein 1 (961 aa).

Gly residues predominate over residues 1–19; it reads MAERGGAGGGPGGSGGGSS. Disordered stretches follow at residues 1–70 and 76–95; these read MAER…SSST and VAVA…RTPA. At Ala2 the chain carries N-acetylalanine. Residues 20 to 34 are compositionally biased toward low complexity; the sequence is QRGSGVAQSPQQQPQ. Ser28 is subject to Phosphoserine. Pro residues predominate over residues 35–46; the sequence is QQPPQPQQPTPP. The residue at position 44 (Thr44) is a Phosphothreonine. Residues 51-70 are compositionally biased toward low complexity; that stretch reads ATSSSSSTSAAAASSSSSST. Tyr249 is subject to Phosphotyrosine. The segment covering 260–271 has biased composition (basic and acidic residues); sequence GIKSKLSDRSPD. Disordered stretches follow at residues 260-297 and 375-426; these read GIKS…LHGQ and NPSD…GKDT. The span at 274 to 291 shows a compositional bias: acidic residues; it reads NYSEEEEESFSSEQEGSD. The stretch at 351 to 375 forms a coiled coil; that stretch reads HVSREQIREVEEDLDELYDSLEMYN. Residues Ser377 and Ser379 each carry the phosphoserine modification. Polar residues predominate over residues 404 to 426; that stretch reads MSQSSSQTEIGSLNSKGSLGKDT. Residues Ser428 and Ser493 each carry the phosphoserine modification. Disordered stretches follow at residues 475–540 and 758–802; these read EKVK…HSTQ and SPST…SMSS. Residue Thr502 is modified to Phosphothreonine. A phosphoserine mark is found at Ser517, Ser526, Ser527, Ser529, and Ser532. The segment covering 768–802 has biased composition (low complexity); sequence SPVVSLTVPSTSPPSSSGLSRDATATPPSSPSMSS.

This sequence belongs to the PACS family. As to quaternary structure, associates with AP-1 and AP-3 but not with AP-2 complexes. Interacts with FURIN. Forms a ternary complex with FURIN and AP-1. Interacts with PKD2 (via acidic region). Interacts with SORL1. Interacts with WDR37.

The protein resides in the golgi apparatus. The protein localises to the trans-Golgi network. Coat protein that is involved in the localization of trans-Golgi network (TGN) membrane proteins that contain acidic cluster sorting motifs. Controls the endosome-to-Golgi trafficking of furin and mannose-6-phosphate receptor by connecting the acidic-cluster-containing cytoplasmic domain of these molecules with the adapter-protein complex-1 (AP-1) of endosomal clathrin-coated membrane pits. Required for normal ER Ca2+ handling in lymphocytes. Together with WDR37, it plays an essential role in lymphocyte development, quiescence and survival. Required for stabilizing peripheral lymphocyte populations. In Mus musculus (Mouse), this protein is Phosphofurin acidic cluster sorting protein 1 (Pacs1).